The following is a 278-amino-acid chain: MQGAKSLGRKQITSCHWNIPTFEYRVNKEEGVYVLLEGELTVQDIDSTFCLAPGELLFVRRGSYVVSTKGKDSRILWIPLSAQFLQGFVQRFGALLSEVERCDEPVPGIIAFAATPLLAGCVKGLKELLVHEHPPMLACLKIEELLMLFAFSPQGPLLMSVLRQLSNRHVERLQLFMEKHYLNEWKLSDFSREFGMGLTTFKELFGSVYGVSPRAWISERRILYAHQLLLNSDMSIVDIAMEAGFSSQSYFTQSYRRRFGCTPSRSRQGKDECRAKNN.

The HTH araC/xylS-type domain occupies 171-269; that stretch reads ERLQLFMEKH…GCTPSRSRQG (99 aa). DNA-binding regions (H-T-H motif) lie at residues 188 to 209 and 236 to 259; these read SDFS…GSVY and IVDI…RRRF.

Homodimer. Interacts with ExsD; this interaction inhibits ExsA activity.

Its activity is regulated as follows. In the absence of inducing signals such as low Ca(2+) or host cell contact, the T3SS/injectisome is expressed at a low basal level and exists in a quiescent state due to ExsA sequestration by ExsD in a 1:1 complex. Upon host cell contact, this interaction is disrupted by the anti-antiactivator protein ExsC leading to ExsA activation. Functionally, transcriptional regulator that plays an essential role in the activation the type III secretion system (T3SS) operons. In addition, ExsA directly regulates the transcription of ImpA virulence factor that cooperatively inhibits the functions of host macrophages together with the T3SS. This Pseudomonas aeruginosa (strain ATCC 15692 / DSM 22644 / CIP 104116 / JCM 14847 / LMG 12228 / 1C / PRS 101 / PAO1) protein is HTH-type transcriptional regulator ExsA (exsA).